A 265-amino-acid chain; its full sequence is Glutamate racemase (265 aa).

Substrate contacts are provided by residues 10-11 and 42-43; these read DS and YG. The Proton donor/acceptor role is filled by C73. 74–75 provides a ligand contact to substrate; it reads NT. The active-site Proton donor/acceptor is the C180. 181-182 contributes to the substrate binding site; that stretch reads TH.

Belongs to the aspartate/glutamate racemases family.

The enzyme catalyses L-glutamate = D-glutamate. It functions in the pathway cell wall biogenesis; peptidoglycan biosynthesis. Functionally, provides the (R)-glutamate required for cell wall biosynthesis. The sequence is that of Glutamate racemase from Synechococcus sp. (strain CC9605).